Reading from the N-terminus, the 227-residue chain is MGGKQSTAARSRGPFPGVSTDDSAVPPPGGAPHFGHYRTGGGAMGLRSRSVSSVAGMGMDPSTAGGVPFSLYTPASRGTGDSERAPGGGGSTSDSTYAHGNGYQETGGGHHRDGMLYLGSRASLADALPLHIAPRWFSSHSGFKCPICSKSVASDEMEMHFIMCLSKPRLSYNDDVLTKDAGECVICLEELLQGDTIARLPCLCIYHKSCIDSWFEVNRSCPEHPAD.

The disordered stretch occupies residues 1 to 42 (MGGKQSTAARSRGPFPGVSTDDSAVPPPGGAPHFGHYRTGGG). Residue Gly-2 is the site of N-myristoyl glycine attachment. Residues 2–10 (GGKQSTAAR) are required for endosomal and lysosomal localization and myristoylation. Phosphoserine occurs at positions 50, 52, and 53. The segment at 65–105 (GGVPFSLYTPASRGTGDSERAPGGGGSTSDSTYAHGNGYQE) is disordered. Tyr-103 is modified (phosphotyrosine). Ser-123 carries the post-translational modification Phosphoserine. An RING-type; atypical zinc finger spans residues 184–225 (CVICLEELLQGDTIARLPCLCIYHKSCIDSWFEVNRSCPEHP).

As to quaternary structure, interacts with AKT1, GLUL and TUBB2A. Interacts with ZNRF2. Interacts (via its RING domain) with UBE2N. Interacts (when phosphorylated) with YWHAE. In terms of processing, N-myristoylation targets ZNRF1 to intracellular membranes. Post-translationally, phosphorylated by SRC at Tyr-103; leading to 'Lys-63'-linked ubiquitination of TLR3, lysosomal trafficking and degradation.

The protein localises to the endosome. Its subcellular location is the lysosome. It is found in the membrane. It localises to the cytoplasmic vesicle. The protein resides in the secretory vesicle. The protein localises to the synaptic vesicle membrane. The catalysed reaction is S-ubiquitinyl-[E2 ubiquitin-conjugating enzyme]-L-cysteine + [acceptor protein]-L-lysine = [E2 ubiquitin-conjugating enzyme]-L-cysteine + N(6)-ubiquitinyl-[acceptor protein]-L-lysine.. The protein operates within protein modification; protein ubiquitination. In terms of biological role, E3 ubiquitin-protein ligase that plays a role in different processes including cell differentiation, receptor recycling or regulation of inflammation. Mediates the ubiquitination of AKT1 and GLUL, thereby playing a role in neuron cells differentiation. Plays a role in the establishment and maintenance of neuronal transmission and plasticity. Regulates Schwann cells differentiation by mediating ubiquitination of GLUL. Promotes neurodegeneration by mediating 'Lys-48'-linked polyubiquitination and subsequent degradation of AKT1 in axons: degradation of AKT1 prevents AKT1-mediated phosphorylation of GSK3B, leading to GSK3B activation and phosphorylation of DPYSL2/CRMP2 followed by destabilization of microtubule assembly in axons. Ubiquitinates the Na(+)/K(+) ATPase alpha-1 subunit/ATP1A1 and thereby influences its endocytosis and/or degradation. Controls ligand-induced EGFR signaling via mediating receptor ubiquitination and recruitment of the ESCRT machinery. Acts as a negative feedback mechanism controlling TLR3 trafficking by mediating TLR3 'Lys-63'-linked polyubiquitination to reduce type I IFN production. Modulates inflammation by promoting caveolin-1/CAV1 ubiquitination and degradation to regulate TLR4-activated immune response. This Mus musculus (Mouse) protein is E3 ubiquitin-protein ligase ZNRF1 (Znrf1).